A 620-amino-acid chain; its full sequence is Chaperone protein HscA homolog (620 aa).

It belongs to the heat shock protein 70 family.

Chaperone involved in the maturation of iron-sulfur cluster-containing proteins. Has a low intrinsic ATPase activity which is markedly stimulated by HscB. The protein is Chaperone protein HscA homolog of Janthinobacterium sp. (strain Marseille) (Minibacterium massiliensis).